Here is an 874-residue protein sequence, read N- to C-terminus: Alanine--tRNA ligase (874 aa).

Positions 562, 566, 665, and 669 each coordinate Zn(2+).

It belongs to the class-II aminoacyl-tRNA synthetase family. It depends on Zn(2+) as a cofactor.

The protein localises to the cytoplasm. The catalysed reaction is tRNA(Ala) + L-alanine + ATP = L-alanyl-tRNA(Ala) + AMP + diphosphate. Its function is as follows. Catalyzes the attachment of alanine to tRNA(Ala) in a two-step reaction: alanine is first activated by ATP to form Ala-AMP and then transferred to the acceptor end of tRNA(Ala). Also edits incorrectly charged Ser-tRNA(Ala) and Gly-tRNA(Ala) via its editing domain. The chain is Alanine--tRNA ligase from Pseudomonas putida (strain ATCC 47054 / DSM 6125 / CFBP 8728 / NCIMB 11950 / KT2440).